Here is a 273-residue protein sequence, read N- to C-terminus: Undecaprenyl-diphosphatase (273 aa).

8 helical membrane passes run Leu-7 to Ser-27, Ala-45 to Trp-65, Leu-89 to His-109, Leu-115 to Ala-135, Thr-152 to Phe-171, Tyr-189 to Leu-209, Ala-221 to Ile-241, and Phe-253 to Leu-273.

Belongs to the UppP family.

The protein resides in the cell inner membrane. It carries out the reaction di-trans,octa-cis-undecaprenyl diphosphate + H2O = di-trans,octa-cis-undecaprenyl phosphate + phosphate + H(+). Catalyzes the dephosphorylation of undecaprenyl diphosphate (UPP). Confers resistance to bacitracin. This chain is Undecaprenyl-diphosphatase, found in Erwinia tasmaniensis (strain DSM 17950 / CFBP 7177 / CIP 109463 / NCPPB 4357 / Et1/99).